Reading from the N-terminus, the 255-residue chain is 5'-nucleotidase SurE (255 aa).

A divalent metal cation contacts are provided by Asp8, Asp9, Ser40, and Asn93.

This sequence belongs to the SurE nucleotidase family. A divalent metal cation is required as a cofactor.

Its subcellular location is the cytoplasm. It catalyses the reaction a ribonucleoside 5'-phosphate + H2O = a ribonucleoside + phosphate. Its function is as follows. Nucleotidase that shows phosphatase activity on nucleoside 5'-monophosphates. The polypeptide is 5'-nucleotidase SurE (Rhodopseudomonas palustris (strain ATCC BAA-98 / CGA009)).